The sequence spans 239 residues: Norbelladine 4'-O-methyltransferase (239 aa).

S-adenosyl-L-methionine-binding positions include valine 55, glutamate 77, 79-80 (GV), serine 85, aspartate 103, and alanine 132. Aspartate 155 lines the a divalent metal cation pocket. Aspartate 157 is a binding site for S-adenosyl-L-methionine. 2 residues coordinate a divalent metal cation: aspartate 181 and asparagine 182.

It belongs to the class I-like SAM-binding methyltransferase superfamily. Cation-dependent O-methyltransferase family. The cofactor is Mg(2+). As to expression, highly expressed in bulbs. Detected in leaves and inflorescences.

It catalyses the reaction norbelladine + S-adenosyl-L-methionine = 4'-O-methylnorbelladine + S-adenosyl-L-homocysteine + H(+). Its pathway is alkaloid biosynthesis. Its function is as follows. 4'-O-methyltransferase converting norbelladine to 4'-O-methylnorbelladine. 4'-O-methylnorbelladine is a precursor to all Amaryllidaceae alkaloids such as galanthamine, lycorine and haemanthamine, and including haemanthamine- and crinamine-type alkaloids, promising anticancer agents. Can use norbelladine, N-methylnorbelladine and dopamine as substrate, but not caffeic acid, vanillin, 3,4-dihydroxybenzaldehyde and tyramine. This Narcissus aff. pseudonarcissus MK-2014 (Daffodil) protein is Norbelladine 4'-O-methyltransferase.